A 1136-amino-acid polypeptide reads, in one-letter code: Unconventional myosin-Ib (1136 aa).

The Myosin motor domain occupies 15-701 (IGVGDTVLLE…TLFQLEDLRK (687 aa)). At Ser-60 the chain carries Phosphoserine. 108–115 (GESGAGKT) contacts ATP. Residue Lys-287 forms a Glycyl lysine isopeptide (Lys-Gly) (interchain with G-Cter in SUMO1); alternate linkage. Residue Lys-287 forms a Glycyl lysine isopeptide (Lys-Gly) (interchain with G-Cter in SUMO2); alternate linkage. Residues 592–599 (YIRCIKPN) are actin-binding. IQ domains follow at residues 704-729 (LEDL…LMKR), 730-750 (SQVV…YQQI), 750-778 (IKSS…HQKR), 780-807 (KEAA…DEAR), 808-837 (NKHA…EARR), and 837-866 (RKHA…ANAG). The TH1 domain occupies 952 to 1136 (KALYPSSVGQ…NNRLLEVAVP (185 aa)).

It belongs to the TRAFAC class myosin-kinesin ATPase superfamily. Myosin family.

In terms of biological role, motor protein that may participate in process critical to neuronal development and function such as cell migration, neurite outgrowth and vesicular transport. This chain is Unconventional myosin-Ib (Myo1b), found in Rattus norvegicus (Rat).